Here is a 98-residue protein sequence, read N- to C-terminus: Hainantoxin-XVII.2 (98 aa).

An N-terminal signal peptide occupies residues 1–40 (MTTVGVSLFRRSPEKITMKIAAFLGLSFLLIASYVLICEA). A propeptide spanning residues 41–64 (QHPGFQELLILEENMRDPENSKER) is cleaved from the precursor. 3 disulfide bridges follow: cysteine 66–cysteine 81, cysteine 73–cysteine 85, and cysteine 80–cysteine 95.

Belongs to the hainantoxin family. 17 subfamily. In terms of tissue distribution, expressed by the venom gland.

The protein localises to the secreted. Functionally, putative ion channel inhibitor. This chain is Hainantoxin-XVII.2, found in Cyriopagopus hainanus (Chinese bird spider).